Here is a 667-residue protein sequence, read N- to C-terminus: Transcription factor 4 (667 aa).

The interval 1 to 83 is essential for MYOD1 inhibition; it reads MHHQQRMAAL…GTPYDHMTSR (83 aa). A 9aaTAD motif is present at residues 18 to 26; it reads DLLDFSAMF. Disordered stretches follow at residues 24-245, 263-321, 336-379, 466-570, and 634-667; these read AMFS…LGNS, LSYP…SQTG, HTNN…EGPL, SLLP…MANN, and KRRE…MGQM. Positions 29–49 are enriched in polar residues; the sequence is PVSSGKNGPTSLASGHFTGSN. Residues S66, S87, and S92 each carry the phosphoserine modification. Composition is skewed to polar residues over residues 107 to 126, 137 to 155, 205 to 216, and 266 to 306; these read GSYS…QQSL, GTLS…SSNN, KPATSTFPSSFF, and PSHS…TDSI. Low complexity predominate over residues 337 to 348; that stretch reads TNNSFSSNPSTP. Over residues 365–374 the composition is skewed to polar residues; sequence NGGQASSSPN. S372 carries the post-translational modification Phosphoserine. The leucine-zipper stretch occupies residues 379–400; sequence LHSLQSRIEDRLERLDDAIHVL. Composition is skewed to low complexity over residues 467–480 and 503–512; these read LLPN…LPVQ and GQSVSSGSSE. Phosphoserine is present on S515. Composition is skewed to basic and acidic residues over residues 527-542 and 555-570; these read KSSE…KDIK and PEQK…MANN. A bHLH domain is found at 564 to 617; it reads ERRMANNARERLRVRDINEAFKELGRMVQLHLKSDKPQTKLLILHQAVAVILSL. A class A specific domain region spans residues 619-642; the sequence is QQVRERNLNPKAACLKRREEEKVS.

In terms of assembly, efficient DNA binding requires dimerization with another bHLH protein. Forms homo- or heterooligomers with myogenin. Interacts with HIVEP2. Interacts with NEUROD2. Interacts with AGBL1. Interacts with BHLHA9. As to expression, expressed in adult heart, brain, placenta, skeletal muscle and to a lesser extent in the lung. In developing embryonic tissues, expression mostly occurs in the brain.

It is found in the nucleus. Transcription factor that binds to the immunoglobulin enhancer Mu-E5/KE5-motif. Involved in the initiation of neuronal differentiation. Activates transcription by binding to the E box (5'-CANNTG-3'). Binds to the E-box present in the somatostatin receptor 2 initiator element (SSTR2-INR) to activate transcription. Preferentially binds to either 5'-ACANNTGT-3' or 5'-CCANNTGG-3'. In Homo sapiens (Human), this protein is Transcription factor 4 (TCF4).